The chain runs to 607 residues: MNNADRLKRQKSIRNFSIIAHIDHGKSTLADRILEKTGALTSREMKDQTLDAMDLERERGITIKLNAVQLKYTAKDGEEYILHLIDTPGHVDFTYEVSRSLAACEGAVLVVDAAQGIEAQTLANVYLALDNDLEILPIINKIDLPSADVERVRQEIEDVIGLDASEAVPTSAKAGIGIEEILEQIVAKVPAPTGDPEAPLEALIFDSYYDAYRGVVASIRVVNGTVKVGDKIRMMSTGKDFEVLELAVSTPKPLRQKELTVGDVGTLSASIKTVGDVRVGDTITLAKQPAQEALPGYRKMNPMVYCGLYPIDAARYNDLREALERLQLSDAALEFEPETSQALGFGFRCGFLGMLHMEIIQERIEREFNIDMITTAPSVIYHVTTTAGEVLHVDNPSKMPEQQKVEFIEEPYVKAAVMTPNDYVGAIMELCQKKRGTFIDMEYIDTTRVKITYELPLSEIVYDFFDQLKSSTKGYASLDYELIGYQQSRLVKMDILLNNENVDALSFIVHRDFAYERGKVIVDKLKELIPRMQFEVPIQAAVGTKIVARSTIKALRKNVLAKCYGGDISRKRKLLEKQKEGKKRMKMVGSVEVPQEAFMSVLSMDED.

Positions 11 to 193 (KSIRNFSIIA…QIVAKVPAPT (183 aa)) constitute a tr-type G domain. Residues 23 to 28 (DHGKST) and 140 to 143 (NKID) contribute to the GTP site.

This sequence belongs to the TRAFAC class translation factor GTPase superfamily. Classic translation factor GTPase family. LepA subfamily.

The protein localises to the cell membrane. The catalysed reaction is GTP + H2O = GDP + phosphate + H(+). In terms of biological role, required for accurate and efficient protein synthesis under certain stress conditions. May act as a fidelity factor of the translation reaction, by catalyzing a one-codon backward translocation of tRNAs on improperly translocated ribosomes. Back-translocation proceeds from a post-translocation (POST) complex to a pre-translocation (PRE) complex, thus giving elongation factor G a second chance to translocate the tRNAs correctly. Binds to ribosomes in a GTP-dependent manner. This Exiguobacterium sibiricum (strain DSM 17290 / CCUG 55495 / CIP 109462 / JCM 13490 / 255-15) protein is Elongation factor 4.